A 259-amino-acid polypeptide reads, in one-letter code: Glucosamine-6-phosphate deaminase (259 aa).

The Proton acceptor; for enolization step role is filled by Asp-66. Asp-135 (for ring-opening step) is an active-site residue. The active-site Proton acceptor; for ring-opening step is the His-137. The For ring-opening step role is filled by Glu-142.

The protein belongs to the glucosamine/galactosamine-6-phosphate isomerase family. NagB subfamily.

The catalysed reaction is alpha-D-glucosamine 6-phosphate + H2O = beta-D-fructose 6-phosphate + NH4(+). Its pathway is amino-sugar metabolism; N-acetylneuraminate degradation; D-fructose 6-phosphate from N-acetylneuraminate: step 5/5. Its function is as follows. Catalyzes the reversible isomerization-deamination of glucosamine 6-phosphate (GlcN6P) to form fructose 6-phosphate (Fru6P) and ammonium ion. In Pseudarthrobacter chlorophenolicus (strain ATCC 700700 / DSM 12829 / CIP 107037 / JCM 12360 / KCTC 9906 / NCIMB 13794 / A6) (Arthrobacter chlorophenolicus), this protein is Glucosamine-6-phosphate deaminase.